Consider the following 406-residue polypeptide: Bifunctional enzyme IspD/IspF (406 aa).

Positions 1-246 (MLQMPSKQPI…KLSASLLPDV (246 aa)) are 2-C-methyl-D-erythritol 4-phosphate cytidylyltransferase. Positions 247–406 (RTGNGYDVHQ…ATVVYRGVKR (160 aa)) are 2-C-methyl-D-erythritol 2,4-cyclodiphosphate synthase. Residues aspartate 253 and histidine 255 each contribute to the a divalent metal cation site. 4-CDP-2-C-methyl-D-erythritol 2-phosphate is bound by residues 253 to 255 (DVH) and 279 to 280 (HS). Histidine 287 is a binding site for a divalent metal cation. Residues 301 to 303 (DIG), 377 to 380 (TTNE), phenylalanine 384, and arginine 387 contribute to the 4-CDP-2-C-methyl-D-erythritol 2-phosphate site.

This sequence in the N-terminal section; belongs to the IspD/TarI cytidylyltransferase family. IspD subfamily. It in the C-terminal section; belongs to the IspF family. The cofactor is a divalent metal cation.

The catalysed reaction is 2-C-methyl-D-erythritol 4-phosphate + CTP + H(+) = 4-CDP-2-C-methyl-D-erythritol + diphosphate. It carries out the reaction 4-CDP-2-C-methyl-D-erythritol 2-phosphate = 2-C-methyl-D-erythritol 2,4-cyclic diphosphate + CMP. It functions in the pathway isoprenoid biosynthesis; isopentenyl diphosphate biosynthesis via DXP pathway; isopentenyl diphosphate from 1-deoxy-D-xylulose 5-phosphate: step 2/6. The protein operates within isoprenoid biosynthesis; isopentenyl diphosphate biosynthesis via DXP pathway; isopentenyl diphosphate from 1-deoxy-D-xylulose 5-phosphate: step 4/6. Bifunctional enzyme that catalyzes the formation of 4-diphosphocytidyl-2-C-methyl-D-erythritol from CTP and 2-C-methyl-D-erythritol 4-phosphate (MEP) (IspD), and catalyzes the conversion of 4-diphosphocytidyl-2-C-methyl-D-erythritol 2-phosphate (CDP-ME2P) to 2-C-methyl-D-erythritol 2,4-cyclodiphosphate (ME-CPP) with a corresponding release of cytidine 5-monophosphate (CMP) (IspF). In Rhizobium leguminosarum bv. trifolii (strain WSM2304), this protein is Bifunctional enzyme IspD/IspF.